A 172-amino-acid polypeptide reads, in one-letter code: 3-hydroxydecanoyl-[acyl-carrier-protein] dehydratase (172 aa).

His71 is an active-site residue.

Belongs to the thioester dehydratase family. FabA subfamily. In terms of assembly, homodimer.

It localises to the cytoplasm. The catalysed reaction is a (3R)-hydroxyacyl-[ACP] = a (2E)-enoyl-[ACP] + H2O. The enzyme catalyses (3R)-hydroxydecanoyl-[ACP] = (2E)-decenoyl-[ACP] + H2O. It catalyses the reaction (2E)-decenoyl-[ACP] = (3Z)-decenoyl-[ACP]. It participates in lipid metabolism; fatty acid biosynthesis. Its function is as follows. Necessary for the introduction of cis unsaturation into fatty acids. Catalyzes the dehydration of (3R)-3-hydroxydecanoyl-ACP to E-(2)-decenoyl-ACP and then its isomerization to Z-(3)-decenoyl-ACP. Can catalyze the dehydratase reaction for beta-hydroxyacyl-ACPs with saturated chain lengths up to 16:0, being most active on intermediate chain length. The chain is 3-hydroxydecanoyl-[acyl-carrier-protein] dehydratase from Klebsiella pneumoniae (strain 342).